The primary structure comprises 512 residues: Sucrose-6-phosphate hydrolase (512 aa).

Residues 40–43 (WMND), glutamine 59, tryptophan 67, 102–103 (FS), 165–166 (RD), glutamate 229, and tryptophan 311 each bind substrate. The active site involves aspartate 43.

The protein belongs to the glycosyl hydrolase 32 family.

It is found in the cytoplasm. The catalysed reaction is Hydrolysis of terminal non-reducing beta-D-fructofuranoside residues in beta-D-fructofuranosides.. Its pathway is glycan biosynthesis; sucrose metabolism. The sequence is that of Sucrose-6-phosphate hydrolase (sacA) from Zymomonas mobilis subsp. mobilis (strain ATCC 31821 / ZM4 / CP4).